The primary structure comprises 259 residues: tRNA (guanine-N(7)-)-methyltransferase (259 aa).

Basic and acidic residues predominate over residues 1-11; that stretch reads MSNTDNSDKNT. Residues 1–29 are disordered; sequence MSNTDNSDKNTKPTGYRPPQTDFNTEFGN. Residues E89, E114, D141, and D164 each coordinate S-adenosyl-L-methionine. The active site involves D164. Substrate-binding positions include K168, D200, and 238 to 241; that span reads TKFE.

The protein belongs to the class I-like SAM-binding methyltransferase superfamily. TrmB family.

The enzyme catalyses guanosine(46) in tRNA + S-adenosyl-L-methionine = N(7)-methylguanosine(46) in tRNA + S-adenosyl-L-homocysteine. Its pathway is tRNA modification; N(7)-methylguanine-tRNA biosynthesis. Catalyzes the formation of N(7)-methylguanine at position 46 (m7G46) in tRNA. The protein is tRNA (guanine-N(7)-)-methyltransferase of Corynebacterium diphtheriae (strain ATCC 700971 / NCTC 13129 / Biotype gravis).